We begin with the raw amino-acid sequence, 375 residues long: Dual-specificity RNA methyltransferase RlmN (375 aa).

The Proton acceptor role is filled by glutamate 93. Residues 99–346 form the Radical SAM core domain; it reads ETNRGTLCVS…TTTRKTRGDD (248 aa). Cysteine 106 and cysteine 351 are disulfide-bonded. The [4Fe-4S] cluster site is built by cysteine 113, cysteine 117, and cysteine 120. S-adenosyl-L-methionine contacts are provided by residues 177–178, serine 209, 231–233, and asparagine 308; these read GE and SLH. Cysteine 351 functions as the S-methylcysteine intermediate in the catalytic mechanism.

This sequence belongs to the radical SAM superfamily. RlmN family. It depends on [4Fe-4S] cluster as a cofactor.

Its subcellular location is the cytoplasm. It catalyses the reaction adenosine(2503) in 23S rRNA + 2 reduced [2Fe-2S]-[ferredoxin] + 2 S-adenosyl-L-methionine = 2-methyladenosine(2503) in 23S rRNA + 5'-deoxyadenosine + L-methionine + 2 oxidized [2Fe-2S]-[ferredoxin] + S-adenosyl-L-homocysteine. The catalysed reaction is adenosine(37) in tRNA + 2 reduced [2Fe-2S]-[ferredoxin] + 2 S-adenosyl-L-methionine = 2-methyladenosine(37) in tRNA + 5'-deoxyadenosine + L-methionine + 2 oxidized [2Fe-2S]-[ferredoxin] + S-adenosyl-L-homocysteine. Functionally, specifically methylates position 2 of adenine 2503 in 23S rRNA and position 2 of adenine 37 in tRNAs. m2A2503 modification seems to play a crucial role in the proofreading step occurring at the peptidyl transferase center and thus would serve to optimize ribosomal fidelity. In Azoarcus sp. (strain BH72), this protein is Dual-specificity RNA methyltransferase RlmN.